The chain runs to 351 residues: MTILSDVKALGQQIWLDNLSRSLVQSGELAQMLKQGVCGVTSNPAIFQKAFAGDALYADEVAALKQQDLSPKQRYETMAVADVRAACGICLAEHESTGGKTGFVSLEVSPELSKDAQGTVEEARRLYAAIGCKNAMIKVPATDAGIDALETLVSDGISVNLTLLFSRVQTLKAYAAYARGIAKRLAAGQSVAHIHVVASFFISRVDGALDTTLPDHLKGKIAIALAKAAYQDWEQYFTTPEFAALEAQGANRVQLLWASTGVKNPAYPDTLYVDNLIGAHTVNTVPDATLKAFIDHGTAKATLTEGVEEAQAQLAETAALGIDVETLANRLQEDGLKQFEEAFEKLLAPLV.

Lys138 acts as the Schiff-base intermediate with substrate in catalysis.

The protein belongs to the transaldolase family. Type 2 subfamily.

The protein localises to the cytoplasm. The catalysed reaction is D-sedoheptulose 7-phosphate + D-glyceraldehyde 3-phosphate = D-erythrose 4-phosphate + beta-D-fructose 6-phosphate. It participates in carbohydrate degradation; pentose phosphate pathway; D-glyceraldehyde 3-phosphate and beta-D-fructose 6-phosphate from D-ribose 5-phosphate and D-xylulose 5-phosphate (non-oxidative stage): step 2/3. In terms of biological role, transaldolase is important for the balance of metabolites in the pentose-phosphate pathway. This is Transaldolase from Neisseria meningitidis serogroup C (strain 053442).